Here is a 156-residue protein sequence, read N- to C-terminus: Small ribosomal subunit protein uS7 (156 aa).

The protein belongs to the universal ribosomal protein uS7 family. In terms of assembly, part of the 30S ribosomal subunit. Contacts proteins S9 and S11.

Functionally, one of the primary rRNA binding proteins, it binds directly to 16S rRNA where it nucleates assembly of the head domain of the 30S subunit. Is located at the subunit interface close to the decoding center, probably blocks exit of the E-site tRNA. This Limosilactobacillus fermentum (strain NBRC 3956 / LMG 18251) (Lactobacillus fermentum) protein is Small ribosomal subunit protein uS7.